The chain runs to 213 residues: Superoxide dismutase [Mn] (213 aa).

His-27, His-82, Asp-168, and His-172 together coordinate Mn(2+).

It belongs to the iron/manganese superoxide dismutase family. In terms of assembly, homodimer.

The catalysed reaction is 2 superoxide + 2 H(+) = H2O2 + O2. Inhibited by hydrogen peroxide. Its function is as follows. Destroys superoxide anion radicals which are normally produced within the cells and which are toxic to biological systems. The sequence is that of Superoxide dismutase [Mn] (sodA) from Haemophilus ducreyi (strain 35000HP / ATCC 700724).